We begin with the raw amino-acid sequence, 115 residues long: NADH-ubiquinone oxidoreductase chain 3 (115 aa).

3 helical membrane passes run Leu4–Leu24, Phe55–Ile75, and Met87–Ile107.

This sequence belongs to the complex I subunit 3 family. In terms of assembly, core subunit of respiratory chain NADH dehydrogenase (Complex I) which is composed of 45 different subunits. Interacts with TMEM186. Interacts with TMEM242.

The protein resides in the mitochondrion inner membrane. It catalyses the reaction a ubiquinone + NADH + 5 H(+)(in) = a ubiquinol + NAD(+) + 4 H(+)(out). In terms of biological role, core subunit of the mitochondrial membrane respiratory chain NADH dehydrogenase (Complex I) which catalyzes electron transfer from NADH through the respiratory chain, using ubiquinone as an electron acceptor. Essential for the catalytic activity of complex I. This Neotoma floridana (Eastern woodrat) protein is NADH-ubiquinone oxidoreductase chain 3.